A 409-amino-acid polypeptide reads, in one-letter code: Shaggy-related protein kinase gamma (409 aa).

A2 is modified (N-acetylalanine). The region spanning Y73 to F357 is the Protein kinase domain. ATP contacts are provided by residues V79–V87 and K102. The active-site Proton acceptor is D198. Y233 carries the phosphotyrosine modification.

It belongs to the protein kinase superfamily. CMGC Ser/Thr protein kinase family. GSK-3 subfamily. In terms of assembly, binds to KIB1. Component of a complex made of POLAR, BASL, ASK7/BIN2 and ASK3/SK12. Binds to POLAR and BASL. Autophosphorylated mainly on threonine and serine residues. In terms of tissue distribution, roots, shoots and leaves.

The protein resides in the cytoplasm. The protein localises to the cell cortex. The enzyme catalyses L-seryl-[protein] + ATP = O-phospho-L-seryl-[protein] + ADP + H(+). It carries out the reaction L-threonyl-[protein] + ATP = O-phospho-L-threonyl-[protein] + ADP + H(+). May mediate extracellular signals to regulate transcription in differentiating cells. Probably involved first at the cortical polarity site, to restrict MAPK signaling and promote asymmetric cell division (ACD), and second in the nucleus of stomatal lineage ground cells (SLGCs) or meristemoids, to limit cell division and to promote differentiation into pavement or stomatal guard cells, respectively. Phosphorylate YDA and SPCH in vitro. The chain is Shaggy-related protein kinase gamma from Arabidopsis thaliana (Mouse-ear cress).